Consider the following 682-residue polypeptide: MKKILGFLFIVCSLGLSATVHGETTNSQQLLSNNINTELINHNSNAILSSTEGSTTDSINLGAQSPAVKSTTRTELDVTGAAKTLLQTSAVQKEMKVSLQETQVSSEFSKRDSVTNKEAVPVSKDELLEQSEVVVSTSSIQKNKILDNKKKRANFVTSSPLIKEKPSNSKDASGVIDNSASPLSYRKAKEVVSLRQPLKNQKVEAQPLLISNSSEKKASVYTNSHDFWDYQWDMKYVTNNGESYALYQPSKKISVGIIDSGIMEEHPDLSNSLGNYFKNLVPKGGFDNEEPDETGNPSDIVDKMGHGTEVAGQITANGNILGVAPGITVNIYRVFGENLSKSEWVARAIRRAADDGNKVINISAGQYLMISGSYDDGTNDYQEYLNYKSAINYATAKGSIVVAALGNDSLNIQDNQTMINFLKRFRSIKVPGKVVDAPSVFEDVIAVGGIDGYGNISDFSNIGADAIYAPAGTTANFKKYGQDKFVSQGYYLKDWLFTTANTGWYQYVYGNSFATPKVSGALALVVDKYGIKNPNQLKRFLLMNSPEVNGNRVLNIVDLLNGKNKAFSLDTDKGQDDAINHKSMENLKESRDTMKQEQDKEIQRNTNNNFSIKNDFHNISKEVISVDYNINQKMANNRNSRGAVSVRSQEILPVTGDGEDFLPALGIVCISILGILKRKTKN.

Residues 1-22 (MKKILGFLFIVCSLGLSATVHG) form the signal peptide. A propeptide spanning residues 23–195 (ETTNSQQLLS…RKAKEVVSLR (173 aa)) is cleaved from the precursor. One can recognise a Peptidase S8 domain in the interval 231-566 (QWDMKYVTNN…VDLLNGKNKA (336 aa)). Residues D259, H306, and S512 each act as charge relay system in the active site. Positions 652 to 656 (LPVTG) match the LPXTG sorting signal motif. T655 carries the pentaglycyl murein peptidoglycan amidated threonine modification. The propeptide at 656-682 (GDGEDFLPALGIVCISILGILKRKTKN) is removed by sortase.

It belongs to the peptidase S8 family.

The protein localises to the secreted. The protein resides in the cell wall. It participates in antibiotic biosynthesis; nisin biosynthesis. Its function is as follows. Cleaves the lantibiotic nisin precursor peptide. In Lactococcus lactis subsp. lactis (Streptococcus lactis), this protein is Nisin leader peptide-processing serine protease NisP (nisP).